The following is a 70-amino-acid chain: Virion membrane protein OPG139 (70 aa).

Residues methionine 1–serine 21 form a helical membrane-spanning segment. The Virion surface portion of the chain corresponds to methionine 22 to valine 70. The tract at residues glutamine 30 to phenylalanine 50 is disordered. The segment covering asparagine 33–proline 45 has biased composition (pro residues). Serine 40 bears the Phosphoserine; by host mark.

It belongs to the orthopoxvirus OPG139 family. In terms of processing, phosphorylated by a OPG054-independent mechanism.

It localises to the virion membrane. In terms of biological role, essential for the encapsidation of DNA into immature virions (IV) and the subsequent maturation of IV into mature virions (MV). The polypeptide is Virion membrane protein OPG139 (OPG139) (Homo sapiens (Human)).